The chain runs to 87 residues: Sec-independent protein translocase protein TatA (87 aa).

The chain crosses the membrane as a helical span at residues 3-23 (IFGIGLPEMIVILVVALLIFG). The tract at residues 61-87 (EGVKVSTSASEPEKVVDVSSATNTNKN) is disordered.

The protein belongs to the TatA/E family. Forms a complex with TatC.

Its subcellular location is the cell inner membrane. Functionally, part of the twin-arginine translocation (Tat) system that transports large folded proteins containing a characteristic twin-arginine motif in their signal peptide across membranes. TatA could form the protein-conducting channel of the Tat system. The chain is Sec-independent protein translocase protein TatA from Trichodesmium erythraeum (strain IMS101).